A 286-amino-acid chain; its full sequence is 33 kDa chaperonin (286 aa).

Cystine bridges form between cysteine 225–cysteine 227 and cysteine 258–cysteine 261.

The protein belongs to the HSP33 family. Under oxidizing conditions two disulfide bonds are formed involving the reactive cysteines. Under reducing conditions zinc is bound to the reactive cysteines and the protein is inactive.

It localises to the cytoplasm. Redox regulated molecular chaperone. Protects both thermally unfolding and oxidatively damaged proteins from irreversible aggregation. Plays an important role in the bacterial defense system toward oxidative stress. The chain is 33 kDa chaperonin from Shewanella sp. (strain ANA-3).